Consider the following 275-residue polypeptide: Large ribosomal subunit protein uL2 (275 aa).

Residues 216-275 form a disordered region; that stretch reads GIRPQTRGSAMNPIDHPHGGGEGKTNSGRHPVTPWGMPTKGYKTRKKKASDKLIISKRKK. Residues 257 to 275 are compositionally biased toward basic residues; sequence YKTRKKKASDKLIISKRKK.

Belongs to the universal ribosomal protein uL2 family. As to quaternary structure, part of the 50S ribosomal subunit. Forms a bridge to the 30S subunit in the 70S ribosome.

One of the primary rRNA binding proteins. Required for association of the 30S and 50S subunits to form the 70S ribosome, for tRNA binding and peptide bond formation. It has been suggested to have peptidyltransferase activity; this is somewhat controversial. Makes several contacts with the 16S rRNA in the 70S ribosome. The sequence is that of Large ribosomal subunit protein uL2 from Aliarcobacter butzleri (strain RM4018) (Arcobacter butzleri).